Reading from the N-terminus, the 2300-residue chain is Adenylate cyclase (2300 aa).

Polar residues-rich tracts occupy residues methionine 1 to threonine 21 and threonine 28 to leucine 41. Disordered regions lie at residues methionine 1–leucine 256, glycine 272–arginine 593, and threonine 631–aspartate 652. Composition is skewed to low complexity over residues serine 42–serine 61 and serine 92–proline 152. Residues threonine 153–serine 169 show a composition bias toward polar residues. A compositionally biased stretch (basic and acidic residues) spans isoleucine 170–methionine 185. Positions glutamine 204–glutamine 221 are enriched in low complexity. Positions valine 228 to glutamine 237 are enriched in polar residues. Residues serine 303–serine 313 are compositionally biased toward low complexity. Positions glycine 333 to serine 344 are enriched in basic and acidic residues. Residues glutamate 345–methionine 357 show a composition bias toward polar residues. A compositionally biased stretch (pro residues) spans proline 410 to glutamate 421. A compositionally biased stretch (polar residues) spans aspartate 455–serine 469. Residues lysine 484–serine 501 are compositionally biased toward basic and acidic residues. Over residues asparagine 511 to alanine 550 the composition is skewed to polar residues. Basic residues predominate over residues serine 552–asparagine 565. Positions threonine 631–lysine 643 are enriched in low complexity. One can recognise a Ras-associating domain in the interval serine 749–serine 841. LRR repeat units lie at residues asparagine 867–lysine 890, alanine 892–alanine 914, cysteine 915–alanine 938, serine 939–lysine 961, leucine 962–lysine 986, leucine 988–leucine 1008, glutamate 1009–leucine 1031, asparagine 1033–leucine 1055, valine 1056–arginine 1079, glutamate 1081–phenylalanine 1097, glutamate 1098–valine 1119, proline 1120–leucine 1142, methionine 1143–leucine 1165, lysine 1166–leucine 1188, threonine 1189–alanine 1211, and lysine 1213–alanine 1234. Positions proline 1228–lysine 1336 are disordered. Polar residues predominate over residues alanine 1253–proline 1263. Over residues threonine 1313–valine 1327 the composition is skewed to low complexity. LRR repeat units follow at residues serine 1349–glutamate 1369, leucine 1373–serine 1396, proline 1398–glutamate 1420, histidine 1422–alanine 1445, lysine 1447–tryptophan 1469, and asparagine 1474–proline 1497. The PPM-type phosphatase domain maps to proline 1552–valine 1828. A disordered region spans residues phenylalanine 1847 to valine 1867. One can recognise a Guanylate cyclase domain in the interval serine 1892–serine 2029. Mg(2+) is bound by residues aspartate 1897 and aspartate 1940. The tract at residues leucine 2272 to glutamate 2300 is disordered. The segment covering aspartate 2290 to glutamate 2300 has biased composition (acidic residues).

The protein belongs to the adenylyl cyclase class-4/guanylyl cyclase family. Mg(2+) is required as a cofactor.

The catalysed reaction is ATP = 3',5'-cyclic AMP + diphosphate. Functionally, plays essential roles in regulation of cellular metabolism by catalyzing the synthesis of a second messenger, cAMP. The polypeptide is Adenylate cyclase (cr-1) (Neurospora crassa (strain ATCC 24698 / 74-OR23-1A / CBS 708.71 / DSM 1257 / FGSC 987)).